Reading from the N-terminus, the 154-residue chain is MSLATLDATQHPNLPQSSQTLFSAKATKKLTFEQIAQHIGRNEVAAAAIFYGQAKASPEDIEKLSSLLDIPTPVLEEQLGGFPDRGRSVEMPPKEPLIYRLYEIVQNYGYAYKAVLNEKFGDGIMSAISFSTKVEKETDADGNNWAVITLRGKW.

Residues R100, E103, and S126 contribute to the active site.

It belongs to the cyanase family.

The catalysed reaction is cyanate + hydrogencarbonate + 3 H(+) = NH4(+) + 2 CO2. Its function is as follows. Catalyzes the reaction of cyanate with bicarbonate to produce ammonia and carbon dioxide. The protein is Cyanate hydratase of Aspergillus clavatus (strain ATCC 1007 / CBS 513.65 / DSM 816 / NCTC 3887 / NRRL 1 / QM 1276 / 107).